A 231-amino-acid chain; its full sequence is Ribonuclease HII (231 aa).

Residues Trp-32–Glu-223 form the RNase H type-2 domain. Residues Asp-38, Glu-39, and Asp-130 each contribute to the a divalent metal cation site.

It belongs to the RNase HII family. It depends on Mn(2+) as a cofactor. Mg(2+) is required as a cofactor.

The protein localises to the cytoplasm. The catalysed reaction is Endonucleolytic cleavage to 5'-phosphomonoester.. Endonuclease that specifically degrades the RNA of RNA-DNA hybrids. This Mesorhizobium japonicum (strain LMG 29417 / CECT 9101 / MAFF 303099) (Mesorhizobium loti (strain MAFF 303099)) protein is Ribonuclease HII.